The chain runs to 418 residues: MANKLRNYTINFGPQHPAAHGVLRMILELDGEQIVRADPHIGLLHRGTEKLAETKTYLQALPYMDRLDYVSMMVNEQAYCLAVEKLVGIDVPIRAQYIRVMFAEVTRILNHLMGIGSHAFDIGAMTAILYAFRDREELMDLYEAVSGARMHAAYFRPGGVYRDLPDFMPKYEGSKFRNAKVLKQLNESREGTMLDFIDAFCERFPKNIDTLETLLTDNRIWKQRTVGIGVVSPERAMQKGFTGVMLRGSGVEWDVRKTQPYEVYDKMDFDIPVGVNGDCYDRYLCRMEEMRQSVRIIKQCSEWLRVNPGPVITTNHKFAPPKRTEMKTGMEDLIHHFKLFTEGMHVPEGETYTAVEHPKGEFGVYIISDGANKPYRLKIRAPGFAHLQGMDEMAKGHMLADVVAIIGTQDIVFGEVDR.

It belongs to the complex I 49 kDa subunit family. In terms of assembly, NDH-1 is composed of 14 different subunits. Subunits NuoB, C, D, E, F, and G constitute the peripheral sector of the complex.

Its subcellular location is the cell inner membrane. It carries out the reaction a quinone + NADH + 5 H(+)(in) = a quinol + NAD(+) + 4 H(+)(out). Functionally, NDH-1 shuttles electrons from NADH, via FMN and iron-sulfur (Fe-S) centers, to quinones in the respiratory chain. The immediate electron acceptor for the enzyme in this species is believed to be ubiquinone. Couples the redox reaction to proton translocation (for every two electrons transferred, four hydrogen ions are translocated across the cytoplasmic membrane), and thus conserves the redox energy in a proton gradient. The chain is NADH-quinone oxidoreductase subunit D from Neisseria meningitidis serogroup B (strain ATCC BAA-335 / MC58).